Reading from the N-terminus, the 1365-residue chain is Transcription elongation factor spt6 (1365 aa).

Residues methionine 1–glycine 14 are compositionally biased toward polar residues. Disordered regions lie at residues methionine 1–arginine 165 and phenylalanine 181–proline 202. A compositionally biased stretch (low complexity) spans glutamate 24–aspartate 33. Composition is skewed to acidic residues over residues asparagine 47 to alanine 64, isoleucine 73 to proline 82, aspartate 102 to leucine 111, and glutamate 136 to glutamate 156. A Phosphothreonine modification is found at threonine 137. A Phosphoserine modification is found at serine 143. Serine 454 carries the post-translational modification Phosphoserine. In terms of domain architecture, S1 motif spans aspartate 1050–arginine 1118. Positions serine 1124–tryptophan 1139 are enriched in polar residues. Residues serine 1124–arginine 1146 are disordered. One can recognise an SH2 domain in the interval histidine 1167 to lysine 1262.

It belongs to the SPT6 family.

The protein resides in the nucleus. Its subcellular location is the chromosome. Functionally, histone H3-H4 chaperone that plays a role in maintenance of chromatin structure during RNA polymerase II transcription elongation thereby repressing transcription initiation from cryptic promoters. Mediates the reassembly of nucleosomes onto the promoters of at least a selected set of genes during repression; the nucleosome reassembly is essential for transcriptional repression. This chain is Transcription elongation factor spt6 (spt6), found in Schizosaccharomyces pombe (strain 972 / ATCC 24843) (Fission yeast).